The chain runs to 289 residues: Pantothenate synthetase (289 aa).

28-35 (MGCLHEGH) is an ATP binding site. His-35 functions as the Proton donor in the catalytic mechanism. (R)-pantoate is bound at residue Gln-59. Beta-alanine is bound at residue Gln-59. Residue 147-150 (GLKD) coordinates ATP. Gln-153 contributes to the (R)-pantoate binding site. ATP is bound by residues Val-176 and 184 to 187 (MSSR).

This sequence belongs to the pantothenate synthetase family. As to quaternary structure, homodimer.

It localises to the cytoplasm. It catalyses the reaction (R)-pantoate + beta-alanine + ATP = (R)-pantothenate + AMP + diphosphate + H(+). It participates in cofactor biosynthesis; (R)-pantothenate biosynthesis; (R)-pantothenate from (R)-pantoate and beta-alanine: step 1/1. Its function is as follows. Catalyzes the condensation of pantoate with beta-alanine in an ATP-dependent reaction via a pantoyl-adenylate intermediate. The chain is Pantothenate synthetase from Magnetococcus marinus (strain ATCC BAA-1437 / JCM 17883 / MC-1).